Here is a 309-residue protein sequence, read N- to C-terminus: Ribosomal RNA small subunit methyltransferase H (309 aa).

Residues 44-46 (GGH), aspartate 62, phenylalanine 102, aspartate 118, and glutamine 125 contribute to the S-adenosyl-L-methionine site. The tract at residues 289-309 (LEQQRNSRARSAKLRVAARSS) is disordered.

Belongs to the methyltransferase superfamily. RsmH family.

The protein localises to the cytoplasm. The enzyme catalyses cytidine(1402) in 16S rRNA + S-adenosyl-L-methionine = N(4)-methylcytidine(1402) in 16S rRNA + S-adenosyl-L-homocysteine + H(+). Functionally, specifically methylates the N4 position of cytidine in position 1402 (C1402) of 16S rRNA. The polypeptide is Ribosomal RNA small subunit methyltransferase H (Synechococcus sp. (strain JA-3-3Ab) (Cyanobacteria bacterium Yellowstone A-Prime)).